A 336-amino-acid chain; its full sequence is tRNA N6-adenosine threonylcarbamoyltransferase (336 aa).

Residues H114 and H118 each coordinate Fe cation. Substrate contacts are provided by residues 136 to 140 (LVSGG), D169, G182, D186, and N275. D301 is a Fe cation binding site.

It belongs to the KAE1 / TsaD family. The cofactor is Fe(2+).

It localises to the cytoplasm. The catalysed reaction is L-threonylcarbamoyladenylate + adenosine(37) in tRNA = N(6)-L-threonylcarbamoyladenosine(37) in tRNA + AMP + H(+). In terms of biological role, required for the formation of a threonylcarbamoyl group on adenosine at position 37 (t(6)A37) in tRNAs that read codons beginning with adenine. Is involved in the transfer of the threonylcarbamoyl moiety of threonylcarbamoyl-AMP (TC-AMP) to the N6 group of A37, together with TsaE and TsaB. TsaD likely plays a direct catalytic role in this reaction. This is tRNA N6-adenosine threonylcarbamoyltransferase from Streptococcus pneumoniae (strain CGSP14).